The primary structure comprises 201 residues: Recombination protein RecR (201 aa).

Residues 57-72 form a C4-type zinc finger; that stretch reads CADCRTFTEQEVCNIC. Positions 81–176 constitute a Toprim domain; the sequence is GQICVVESPA…EASRIAHGVP (96 aa).

Belongs to the RecR family.

Functionally, may play a role in DNA repair. It seems to be involved in an RecBC-independent recombinational process of DNA repair. It may act with RecF and RecO. This chain is Recombination protein RecR, found in Shigella boydii serotype 4 (strain Sb227).